Consider the following 582-residue polypeptide: MEIQRALVITGIAVVSYLMIQAWQRDYANTASPVPVEQVAEQGNSSSSDSADLPSVQSQTDNSIPSAQSDNDLPSVSPADIAQPTPSSQRIEVNTDVLRVEINPVGGDIVRLALPDYPKHVDTPDQPFVLMDQNSNGTYVAQSGLVGKNGTDSSKGRPHWNSAQQSYRLAEGDNELNVDLTLTQDSGAEIIKRYTFEKGSYLIRVSHIVRNNGSTPWTGALYGQIKRDGRDDPGLSKAGFAPMPTYLGAAYWSADKPYNKLTFDDMSEDDVKLDQTVEGGWLAMVQHYFVSAWIPDAKQKNHYSSVYLKSRDQYLLRFVSPNTTIQPGEESVLYSEFYAGPKQQDNLEAISPGLNMTVDYGWLWFISQPIFALLVFLQSGEVSVFGMDIDIGGGVGNWGVAIILLTLIIKAIFFKLSATSYRSMAKMRKVAPEMQRIKEQNKNDKQKQQMETMNLFKREKINPLGGCLPMLVQMPVFIALYYVLLESVELRQAPFFLWINDLSVMDPYFVLPILMGASMFLQTRLNPTPADPTQAQVMKWMPMIFAVFMLWFPAGLVLYWLTNNILSIAQQWIITRNIENSA.

The helical transmembrane segment at 3–23 (IQRALVITGIAVVSYLMIQAW) threads the bilayer. The segment at 38 to 92 (QVAEQGNSSSSDSADLPSVQSQTDNSIPSAQSDNDLPSVSPADIAQPTPSSQRIE) is disordered. The segment covering 45-58 (SSSSDSADLPSVQS) has biased composition (low complexity). The segment covering 59-74 (QTDNSIPSAQSDNDLP) has biased composition (polar residues). A run of 5 helical transmembrane segments spans residues 357–377 (TVDY…LVFL), 394–414 (GVGN…AIFF), 464–484 (LGGC…YYVL), 495–515 (FFLW…PILM), and 541–561 (MPMI…LYWL).

This sequence belongs to the OXA1/ALB3/YidC family. Type 1 subfamily. As to quaternary structure, interacts with the Sec translocase complex via SecD. Specifically interacts with transmembrane segments of nascent integral membrane proteins during membrane integration.

The protein resides in the cell inner membrane. Functionally, required for the insertion and/or proper folding and/or complex formation of integral membrane proteins into the membrane. Involved in integration of membrane proteins that insert both dependently and independently of the Sec translocase complex, as well as at least some lipoproteins. Aids folding of multispanning membrane proteins. In Alcanivorax borkumensis (strain ATCC 700651 / DSM 11573 / NCIMB 13689 / SK2), this protein is Membrane protein insertase YidC.